Reading from the N-terminus, the 400-residue chain is Phosphoglycerate kinase (400 aa).

Substrate contacts are provided by residues 23-25 (DLN), Arg38, 61-64 (HFGR), Arg120, and Arg153. ATP is bound by residues Lys203, Glu325, and 355-358 (GGDT).

It belongs to the phosphoglycerate kinase family. Monomer.

The protein localises to the cytoplasm. The catalysed reaction is (2R)-3-phosphoglycerate + ATP = (2R)-3-phospho-glyceroyl phosphate + ADP. It functions in the pathway carbohydrate degradation; glycolysis; pyruvate from D-glyceraldehyde 3-phosphate: step 2/5. This is Phosphoglycerate kinase from Methylobacterium radiotolerans (strain ATCC 27329 / DSM 1819 / JCM 2831 / NBRC 15690 / NCIMB 10815 / 0-1).